Here is a 455-residue protein sequence, read N- to C-terminus: uncharacterized protein (455 aa).

11 consecutive transmembrane segments (helical) span residues 26-46, 53-73, 77-97, 111-131, 146-166, 191-211, 232-252, 256-276, 278-298, 323-343, and 357-377; these read FGPG…QLLI, GAWG…ISIG, LGVM…RSTA, WVVA…LAVI, ALRA…TGVW, AAGV…SLVV, LTVL…AIAV, AHIG…IPAL, ILAA…LIVG, LLVA…GGGG, and ALVL…VVIA. Residues 384 to 455 are disordered; sequence PKRLRPAPPV…LSDEPPPRAD (72 aa).

It is found in the cell membrane. This is an uncharacterized protein from Mycobacterium tuberculosis (strain CDC 1551 / Oshkosh).